Reading from the N-terminus, the 308-residue chain is Tyramine--L-glutamate ligase (308 aa).

The region spanning Lys-89 to Asn-291 is the ATP-grasp domain. Thr-115–Ser-192 is a binding site for ATP. 3 residues coordinate Mg(2+): Asp-252, Glu-264, and Asn-266. Residues Asp-252, Glu-264, and Asn-266 each contribute to the Mn(2+) site.

Mg(2+) serves as cofactor. The cofactor is Mn(2+).

The catalysed reaction is tyramine + L-glutamate + ATP = gamma-L-glutamyltyramine + ADP + phosphate + H(+). It participates in cofactor biosynthesis; methanofuran biosynthesis. Catalyzes the formation of an amide bond between tyramine and the gamma carboxy group of L-glutamate. The enzyme also accepts phenylethylamine in vitro. This Methanocaldococcus jannaschii (strain ATCC 43067 / DSM 2661 / JAL-1 / JCM 10045 / NBRC 100440) (Methanococcus jannaschii) protein is Tyramine--L-glutamate ligase (mfnD).